A 438-amino-acid polypeptide reads, in one-letter code: Methionine aminopeptidase 2 (438 aa).

A disordered region spans residues 1–89 (MAAQAAPAEE…LFPNKQYPKG (89 aa)). Over residues 10–20 (ELSKLSVEETK) the composition is skewed to basic and acidic residues. Basic residues predominate over residues 51–65 (AKKKKKRKPRKKKKA). His-191 is a binding site for substrate. Asp-211, Asp-222, and His-291 together coordinate a divalent metal cation. His-299 provides a ligand contact to substrate. A divalent metal cation-binding residues include Glu-324 and Glu-419.

It belongs to the peptidase M24A family. Methionine aminopeptidase eukaryotic type 2 subfamily. It depends on Co(2+) as a cofactor. Requires Zn(2+) as cofactor. Mn(2+) serves as cofactor. The cofactor is Fe(2+).

Its subcellular location is the cytoplasm. It catalyses the reaction Release of N-terminal amino acids, preferentially methionine, from peptides and arylamides.. In terms of biological role, cotranslationally removes the N-terminal methionine from nascent proteins. The N-terminal methionine is often cleaved when the second residue in the primary sequence is small and uncharged (Met-Ala-, Cys, Gly, Pro, Ser, Thr, or Val). This chain is Methionine aminopeptidase 2, found in Sordaria macrospora (strain ATCC MYA-333 / DSM 997 / K(L3346) / K-hell).